Reading from the N-terminus, the 347-residue chain is MKIFSTLLSQKPKGKLVIRPSTTIHSSDPFSKFIVTKNTEPLSLGDLRKSDSGNSAVCLNAENTILSTLTDLQKEEERNWDPVKFVAGKLRGVISPIQAYVTIGKKFSPNSLVYTSRFFQLHYFPEDHFMSCFRKSKPAITVKSNKKFYLNGKVFNKDKEYFNETRISKANEVELSKIQTAMTRLTNRHRNSIPSEFAYLRRDLKLKVKTTFIKEWCKLNGDKAIREYVNLNRSPNINPASMKGKPKKSFLDNLGRSTVGTAKDGYYLYIVSIFPDKDMLGEFNDEVNRSVQKVANLDWDGFLTPKKGTKGKNWVESFNDSINVQTINKILEINKFPFELRREQTEG.

The protein localises to the mitochondrion matrix. This chain is Protein PET130 (PET130), found in Saccharomyces cerevisiae (strain ATCC 204508 / S288c) (Baker's yeast).